Here is a 377-residue protein sequence, read N- to C-terminus: Chaperone protein DnaJ (377 aa).

Residues 5–70 (DYYQILGIPK…EKRSAYDQYG (66 aa)) enclose the J domain. The segment at 132–210 (GIKKEIQIPT…CHGQGRVETY (79 aa)) adopts a CR-type zinc-finger fold. Zn(2+) is bound by residues cysteine 145, cysteine 148, cysteine 162, cysteine 165, cysteine 184, cysteine 187, cysteine 198, and cysteine 201. CXXCXGXG motif repeat units follow at residues 145–152 (CKTCYGSG), 162–169 (CSTCHGKG), 184–191 (CPTCHGKG), and 198–205 (CNLCHGQG).

It belongs to the DnaJ family. As to quaternary structure, homodimer. The cofactor is Zn(2+).

The protein localises to the cytoplasm. In terms of biological role, participates actively in the response to hyperosmotic and heat shock by preventing the aggregation of stress-denatured proteins and by disaggregating proteins, also in an autonomous, DnaK-independent fashion. Unfolded proteins bind initially to DnaJ; upon interaction with the DnaJ-bound protein, DnaK hydrolyzes its bound ATP, resulting in the formation of a stable complex. GrpE releases ADP from DnaK; ATP binding to DnaK triggers the release of the substrate protein, thus completing the reaction cycle. Several rounds of ATP-dependent interactions between DnaJ, DnaK and GrpE are required for fully efficient folding. Also involved, together with DnaK and GrpE, in the DNA replication of plasmids through activation of initiation proteins. This chain is Chaperone protein DnaJ, found in Buchnera aphidicola subsp. Acyrthosiphon pisum (strain Tuc7).